The primary structure comprises 175 residues: Bifunctional protein PyrR (175 aa).

Substrate-binding positions include 40 to 41, 102 to 110, Arg135, and Val159; these read TR and DDVLYTGRT. Positions 98 to 110 match the PRPP-binding motif; sequence VIIIDDVLYTGRT.

Belongs to the purine/pyrimidine phosphoribosyltransferase family. PyrR subfamily. Homodimer and homohexamer; in equilibrium.

It catalyses the reaction UMP + diphosphate = 5-phospho-alpha-D-ribose 1-diphosphate + uracil. Its function is as follows. Regulates transcriptional attenuation of the pyrimidine nucleotide (pyr) operon by binding in a uridine-dependent manner to specific sites on pyr mRNA. This disrupts an antiterminator hairpin in the RNA and favors formation of a downstream transcription terminator, leading to a reduced expression of downstream genes. In terms of biological role, also displays a weak uracil phosphoribosyltransferase activity which is not physiologically significant. The protein is Bifunctional protein PyrR of Staphylococcus haemolyticus (strain JCSC1435).